The primary structure comprises 130 residues: MSMQDPIADMLTRIRNGQAAKHVSVKMPSAKLKIAIAKMLKEEGYITDYAVADEAKPELEITLKYFQGQPVVETIQRVSRPGLRIYKGKNELPKVMGGLGVAIVSTSQGLMTDRTARQNGMGGEVICYVA.

The protein belongs to the universal ribosomal protein uS8 family. In terms of assembly, part of the 30S ribosomal subunit. Contacts proteins S5 and S12.

In terms of biological role, one of the primary rRNA binding proteins, it binds directly to 16S rRNA central domain where it helps coordinate assembly of the platform of the 30S subunit. This Shewanella pealeana (strain ATCC 700345 / ANG-SQ1) protein is Small ribosomal subunit protein uS8.